We begin with the raw amino-acid sequence, 343 residues long: Fructose-1,6-bisphosphatase class 1 (343 aa).

Positions 90, 109, 111, and 112 each coordinate Mg(2+). Substrate contacts are provided by residues 112-115 (DGSS) and asparagine 199. Glutamate 271 contributes to the Mg(2+) binding site.

This sequence belongs to the FBPase class 1 family. As to quaternary structure, homotetramer. It depends on Mg(2+) as a cofactor.

Its subcellular location is the cytoplasm. It catalyses the reaction beta-D-fructose 1,6-bisphosphate + H2O = beta-D-fructose 6-phosphate + phosphate. Its pathway is carbohydrate biosynthesis; Calvin cycle. This chain is Fructose-1,6-bisphosphatase class 1, found in Rhodopseudomonas palustris (strain HaA2).